The sequence spans 323 residues: Annexin A3 (323 aa).

Residue alanine 2 is modified to N-acetylalanine. Annexin repeat units lie at residues 18–89 (FNPS…ALVT), 90–161 (PPAV…ILAN), 173–245 (QLAR…AIVR), and 249–320 (NTPA…KICG). Lysine 177 is subject to N6-acetyllysine. Phosphothreonine is present on threonine 267.

Belongs to the annexin family.

Inhibitor of phospholipase A2, also possesses anti-coagulant properties. Also cleaves the cyclic bond of inositol 1,2-cyclic phosphate to form inositol 1-phosphate. The protein is Annexin A3 (ANXA3) of Bos taurus (Bovine).